An 888-amino-acid chain; its full sequence is DNA mismatch repair protein MutS (888 aa).

Residue 641–648 coordinates ATP; it reads GPNMAGKS.

It belongs to the DNA mismatch repair MutS family.

In terms of biological role, this protein is involved in the repair of mismatches in DNA. It is possible that it carries out the mismatch recognition step. This protein has a weak ATPase activity. In Rickettsia bellii (strain OSU 85-389), this protein is DNA mismatch repair protein MutS.